The chain runs to 95 residues: Aspartyl/glutamyl-tRNA(Asn/Gln) amidotransferase subunit C (95 aa).

It belongs to the GatC family. In terms of assembly, heterotrimer of A, B and C subunits.

The enzyme catalyses L-glutamyl-tRNA(Gln) + L-glutamine + ATP + H2O = L-glutaminyl-tRNA(Gln) + L-glutamate + ADP + phosphate + H(+). It catalyses the reaction L-aspartyl-tRNA(Asn) + L-glutamine + ATP + H2O = L-asparaginyl-tRNA(Asn) + L-glutamate + ADP + phosphate + 2 H(+). Allows the formation of correctly charged Asn-tRNA(Asn) or Gln-tRNA(Gln) through the transamidation of misacylated Asp-tRNA(Asn) or Glu-tRNA(Gln) in organisms which lack either or both of asparaginyl-tRNA or glutaminyl-tRNA synthetases. The reaction takes place in the presence of glutamine and ATP through an activated phospho-Asp-tRNA(Asn) or phospho-Glu-tRNA(Gln). The chain is Aspartyl/glutamyl-tRNA(Asn/Gln) amidotransferase subunit C from Nitrosococcus oceani (strain ATCC 19707 / BCRC 17464 / JCM 30415 / NCIMB 11848 / C-107).